The chain runs to 340 residues: Nesprin-4 (340 aa).

Disordered regions lie at residues 1–86 (MAQF…DGGK) and 254–277 (HRRR…DAML). Residues 1 to 291 (MAQFPLLGHG…GVPAPASRRP (291 aa)) are Cytoplasmic-facing. Basic and acidic residues predominate over residues 53–63 (APEHFMDEPKS). Residues 283 to 340 (VPAPASRRPLTFLLLLLFLLLVGATLLLPLSGVPCCSHTRLARTPYLVLSYVNGLPPI) enclose the KASH domain. A helical; Anchor for type IV membrane protein transmembrane segment spans residues 292–312 (LTFLLLLLFLLLVGATLLLPL). Residues 313–340 (SGVPCCSHTRLARTPYLVLSYVNGLPPI) are Perinuclear space-facing.

The protein belongs to the nesprin family. As to quaternary structure, core component of LINC complexes which are composed of inner nuclear membrane SUN domain-containing proteins coupled to outer nuclear membrane KASH domain-containing nesprins. SUN and KASH domain-containing proteins seem to bind each other promiscuously; however, differentially expression of LINC complex constituents can give rise to specific assemblies. Probably part of a SUN1-containing LINC complex. Interacts with kinesins KIF5B and KLC1.

The protein localises to the nucleus outer membrane. Functionally, as a component of the LINC (LInker of Nucleoskeleton and Cytoskeleton) complex, involved in the connection between the nuclear lamina and the cytoskeleton. The nucleocytoplasmic interactions established by the LINC complex play an important role in the transmission of mechanical forces across the nuclear envelope and in nuclear movement and positioning. Behaves as a kinesin cargo, providing a functional binding site for kinesin-1 at the nuclear envelope. Hence may contribute to the establishment of secretory epithelial morphology, by promoting kinesin-dependent apical migration of the centrosome and Golgi apparatus and basal localization of the nucleus. The polypeptide is Nesprin-4 (Syne4) (Rattus norvegicus (Rat)).